The primary structure comprises 433 residues: ATP-dependent protease ATPase subunit HslU (433 aa).

ATP is bound by residues V18, 60-65, D246, E311, and R383; that span reads GVGKTE.

Belongs to the ClpX chaperone family. HslU subfamily. In terms of assembly, a double ring-shaped homohexamer of HslV is capped on each side by a ring-shaped HslU homohexamer. The assembly of the HslU/HslV complex is dependent on binding of ATP.

It localises to the cytoplasm. In terms of biological role, ATPase subunit of a proteasome-like degradation complex; this subunit has chaperone activity. The binding of ATP and its subsequent hydrolysis by HslU are essential for unfolding of protein substrates subsequently hydrolyzed by HslV. HslU recognizes the N-terminal part of its protein substrates and unfolds these before they are guided to HslV for hydrolysis. This Rhodopseudomonas palustris (strain BisB5) protein is ATP-dependent protease ATPase subunit HslU.